The chain runs to 139 residues: Large ribosomal subunit protein uL16 (139 aa).

A compositionally biased stretch (basic residues) spans methionine 1–glutamine 13. The tract at residues methionine 1 to serine 23 is disordered.

Belongs to the universal ribosomal protein uL16 family. In terms of assembly, part of the 50S ribosomal subunit.

Functionally, binds 23S rRNA and is also seen to make contacts with the A and possibly P site tRNAs. This Herminiimonas arsenicoxydans protein is Large ribosomal subunit protein uL16.